We begin with the raw amino-acid sequence, 95 residues long: Putative septation protein SpoVG (95 aa).

It belongs to the SpoVG family.

Its function is as follows. Could be involved in septation. The protein is Putative septation protein SpoVG of Brevibacillus brevis (strain 47 / JCM 6285 / NBRC 100599).